A 542-amino-acid polypeptide reads, in one-letter code: Protein phosphatase 1G (542 aa).

G2 carries N-myristoyl glycine lipidation. R22 carries the omega-N-methylarginine modification. The region spanning 26–502 (PYGFSAMQGW…DNMTCIIICF (477 aa)) is the PPM-type phosphatase domain. 2 residues coordinate Mn(2+): D60 and G61. 2 disordered regions span residues 118-139 (AGRP…DVDN) and 162-325 (QNCQ…SDSG). Phosphothreonine is present on T122. Acidic residues-rich tracts occupy residues 123 to 139 (EDED…DVDN) and 259 to 309 (DSED…DEEM). K380 carries the post-translational modification N6-acetyllysine. Residues D438 and D493 each contribute to the Mn(2+) site. The interval 510–542 (LQPESGKRKLEEALSTEGAEENGNSDKKKAKRD) is disordered. Position 524 is a phosphoserine (S524).

The protein belongs to the PP2C family. As to quaternary structure, interacts with NOL3; may dephosphorylate NOL3. Mg(2+) is required as a cofactor. It depends on Mn(2+) as a cofactor.

It localises to the cytoplasm. It is found in the membrane. The catalysed reaction is O-phospho-L-seryl-[protein] + H2O = L-seryl-[protein] + phosphate. It carries out the reaction O-phospho-L-threonyl-[protein] + H2O = L-threonyl-[protein] + phosphate. This chain is Protein phosphatase 1G, found in Rattus norvegicus (Rat).